The following is a 209-amino-acid chain: Ribosomal RNA large subunit methyltransferase E (209 aa).

Residues Gly-63, Trp-65, Asp-83, Asp-99, and Asp-124 each coordinate S-adenosyl-L-methionine. Residue Lys-164 is the Proton acceptor of the active site.

This sequence belongs to the class I-like SAM-binding methyltransferase superfamily. RNA methyltransferase RlmE family.

The protein resides in the cytoplasm. It catalyses the reaction uridine(2552) in 23S rRNA + S-adenosyl-L-methionine = 2'-O-methyluridine(2552) in 23S rRNA + S-adenosyl-L-homocysteine + H(+). In terms of biological role, specifically methylates the uridine in position 2552 of 23S rRNA at the 2'-O position of the ribose in the fully assembled 50S ribosomal subunit. This chain is Ribosomal RNA large subunit methyltransferase E, found in Tolumonas auensis (strain DSM 9187 / NBRC 110442 / TA 4).